Here is a 910-residue protein sequence, read N- to C-terminus: Eukaryotic translation initiation factor 3 subunit C (910 aa).

Positions 1–21 (MSRFFANGSDSESESSEDEIQ) are disordered. Residues 11-20 (SESESSEDEI) show a composition bias toward acidic residues. S34, S165, S176, and S185 each carry phosphoserine. Positions 157–279 (FREAPDQESE…IRKRAEDDED (123 aa)) are disordered. Acidic residues predominate over residues 162–186 (DQESEAEDEVVALESDGGDAGDDSD). The span at 188-207 (GVKPTEAAPKAVKTAPAKAA) shows a compositional bias: low complexity. Positions 209–235 (ADDDDSDDSIDWDSDSESETESSDDEN) are enriched in acidic residues. The segment covering 240 to 268 (MRERFLKRTTEKEEKDDDKRKDKRKEQKI) has biased composition (basic and acidic residues). The region spanning 639–815 (FHMHINLELL…ETVVMHRSEP (177 aa)) is the PCI domain. A disordered region spans residues 847–910 (FFQRGNMGNR…QQQVQTIDEE (64 aa)). The span at 862-874 (NRNQNNQGGNWLG) shows a compositional bias: low complexity. The segment covering 882-891 (RNRNQRGHHK) has biased composition (basic residues). A compositionally biased stretch (low complexity) spans 895 to 910 (DRQQQQQQQVQTIDEE).

Belongs to the eIF-3 subunit C family. In terms of assembly, component of the eukaryotic translation initiation factor 3 (eIF-3) complex. The eIF-3 complex interacts with pix.

It localises to the cytoplasm. In terms of biological role, component of the eukaryotic translation initiation factor 3 (eIF-3) complex, which is involved in protein synthesis of a specialized repertoire of mRNAs and, together with other initiation factors, stimulates binding of mRNA and methionyl-tRNAi to the 40S ribosome. The eIF-3 complex specifically targets and initiates translation of a subset of mRNAs involved in cell proliferation. This Drosophila erecta (Fruit fly) protein is Eukaryotic translation initiation factor 3 subunit C.